A 67-amino-acid chain; its full sequence is Small ribosomal subunit protein bS21 (67 aa).

This sequence belongs to the bacterial ribosomal protein bS21 family.

The chain is Small ribosomal subunit protein bS21 from Desulfovibrio desulfuricans (strain ATCC 27774 / DSM 6949 / MB).